A 591-amino-acid polypeptide reads, in one-letter code: V-type ATP synthase alpha chain (591 aa).

233–240 (GPFGAGKT) provides a ligand contact to ATP.

It belongs to the ATPase alpha/beta chains family.

It catalyses the reaction ATP + H2O + 4 H(+)(in) = ADP + phosphate + 5 H(+)(out). Functionally, produces ATP from ADP in the presence of a proton gradient across the membrane. The V-type alpha chain is a catalytic subunit. In Streptococcus pyogenes serotype M5 (strain Manfredo), this protein is V-type ATP synthase alpha chain.